We begin with the raw amino-acid sequence, 317 residues long: DNA repair nuclease/redox regulator APEX1 (317 aa).

The interval 1–32 is necessary for interaction with YBX1, binding to RNA, association together with NPM1 to rRNA, endoribonuclease activity on abasic RNA and localization in the nucleoli; that stretch reads MPKRGKRAAAEDGEEPKSEPETKKSKGAAKKT. Residues 1–57 form a disordered region; that stretch reads MPKRGKRAAAEDGEEPKSEPETKKSKGAAKKTEKEAAGEGPVLYEDPPDQKTSASGK. The residue at position 6 (lysine 6) is an N6-acetyllysine; by EP300. Residues 8–12 carry the Nuclear localization signal (NLS) motif; it reads AAAED. Residues 15-37 show a composition bias toward basic and acidic residues; the sequence is EPKSEPETKKSKGAAKKTEKEAA. Serine 18 carries the post-translational modification Phosphoserine. Residues 22–32 form a necessary for interaction with NPM1 and for efficient rRNA binding region; sequence TKKSKGAAKKT. N6-acetyllysine is present on residues lysine 26, lysine 30, lysine 31, and lysine 34. A Phosphoserine modification is found at serine 53. The Nuclear export signal (NES) signature appears at 63-79; the sequence is ICSWNVDGLRAWIKKKG. An S-nitrosocysteine; alternate modification is found at cysteine 64. An intrachain disulfide couples cysteine 64 to cysteine 92. Mg(2+) is bound at residue aspartate 69. Position 92 is an S-nitrosocysteine; alternate (cysteine 92). Glutamate 95 contributes to the Mg(2+) binding site. Residue tyrosine 170 is part of the active site. Lysine 196 is subject to N6-acetyllysine. Mg(2+) is bound by residues aspartate 209 and asparagine 211. Aspartate 209 acts as the Proton donor/acceptor in catalysis. Threonine 232 carries the post-translational modification Phosphothreonine; by CDK5. The mitochondrial targeting sequence (MTS) stretch occupies residues 288-317; it reads HSLLPALCDSKIRSKALGSDHCPITLYLAL. A Mg(2+)-binding site is contributed by aspartate 307. Position 309 is an S-nitrosocysteine (cysteine 309).

Belongs to the DNA repair enzymes AP/ExoA family. As to quaternary structure, monomer. Homodimer; disulfide-linked. Component of the SET complex, composed of at least APEX1, SET, ANP32A, HMGB2, NME1 and TREX1. Associates with the dimer XRCC5/XRCC6 in a DNA-dependent manner. Interacts with SIRT1; the interaction is increased in the context of genotoxic stress. Interacts with HDAC1, HDAC2 and HDAC3; the interactions are not dependent on the APEX1 acetylation status. Interacts with XRCC1; the interaction is induced by SIRT1 and increased with the APEX1 acetylated form. Interacts with NPM1 (via N-terminal domain); the interaction is RNA-dependent and decreases in hydrogen peroxide-damaged cells. Interacts (via N-terminus) with YBX1 (via C-terminus); the interaction is increased in presence of APEX1 acetylated. Interacts with HNRNPL; the interaction is DNA-dependent. Interacts (via N-terminus) with KPNA1 and KPNA2. Interacts with TXN; the interaction stimulates the FOS/JUN AP-1 complex DNA-binding activity in a redox-dependent manner. Interacts with GZMA, KRT8, MDM2, POLB, PRDX6, PRPF19, RPLP0, TOMM20 and WDR77. Binds to CDK5. Requires Mg(2+) as cofactor. The cofactor is Mn(2+). Phosphorylated. Phosphorylation by kinase PKC or casein kinase CK2 results in enhanced redox activity that stimulates binding of the FOS/JUN AP-1 complex to its cognate binding site. AP-endodeoxyribonuclease activity is not affected by CK2-mediated phosphorylation. Phosphorylation of Thr-232 by CDK5 in response to MPP(+)/MPTP (1-methyl-4-phenylpyridinium) reduces AP-endodeoxyribonuclease activity resulting in accumulation of DNA damage and contributing to neuronal death. In terms of processing, acetylated on Lys-6. Acetylation is increased by the transcriptional coactivator EP300 acetyltransferase, genotoxic agents like H(2)O(2) and methyl methanesulfonate (MMS). Acetylation increases its binding affinity to the negative calcium response element (nCaRE) DNA promoter. The acetylated form induces a stronger binding of YBX1 to the Y-box sequence in the MDR1 promoter than the unacetylated form. Deacetylated on lysines. Lys-6 is deacetylated by SIRT1. Post-translationally, cleaved at Lys-30 by granzyme A to create the mitochondrial form; leading in reduction of binding to DNA, AP endodeoxyribonuclease activity, redox activation of transcription factors and to enhanced cell death. Cleaved by granzyme K; leading to intracellular ROS accumulation and enhanced cell death after oxidative stress. Cys-64 and Cys-92 are nitrosylated in response to nitric oxide (NO) and lead to the exposure of the nuclear export signal (NES). In terms of processing, ubiquitinated by MDM2; leading to translocation to the cytoplasm and proteasomal degradation.

It localises to the nucleus. Its subcellular location is the nucleolus. The protein resides in the nucleus speckle. The protein localises to the endoplasmic reticulum. It is found in the cytoplasm. It localises to the mitochondrion. The catalysed reaction is a deoxyribonucleotide-2'-deoxyribose-5'-monophosphate-DNA + H2O = a 5'-end 2'-deoxyribose-5'-monophosphate-DNA + a 3'-end 2'-deoxyribonucleotide-DNA + H(+). It carries out the reaction Exonucleolytic cleavage in the 3'- to 5'-direction to yield nucleoside 5'-phosphates.. It catalyses the reaction a 3'-end 2'-deoxyribonucleotide-3'-phosphoglycolate-DNA + H2O = 2-phosphoglycolate + a 3'-end 2'-deoxyribonucleotide-DNA + H(+). The enzyme catalyses a 3'-end 2'-deoxyribonucleotide-8-oxoguanine-DNA + H2O = 8-oxo-dGMP + a 3'-end 2'-deoxyribonucleotide-DNA + H(+). With respect to regulation, NPM1 stimulates endodeoxyribonuclease activity on double-stranded DNA with AP sites, but inhibits endoribonuclease activity on single-stranded RNA containing AP sites. Multifunctional protein that plays a central role in the cellular response to oxidative stress. The two major activities of APEX1 are DNA repair and redox regulation of transcriptional factors. Functions as an apurinic/apyrimidinic (AP) endodeoxyribonuclease in the base excision repair (BER) pathway of DNA lesions induced by oxidative and alkylating agents. Initiates repair of AP sites in DNA by catalyzing hydrolytic incision of the phosphodiester backbone immediately adjacent to the damage, generating a single-strand break with 5'-deoxyribose phosphate and 3'-hydroxyl ends. Also incises at AP sites in the DNA strand of DNA/RNA hybrids, single-stranded DNA regions of R-loop structures, and single-stranded RNA molecules. Operates at switch sites of immunoglobulin (Ig) constant regions where it mediates Ig isotype class switch recombination. Processes AP sites induced by successive action of AICDA and UNG. Generates staggered nicks in opposite DNA strands resulting in the formation of double-strand DNA breaks that are finally resolved via non-homologous end joining repair pathway. Has 3'-5' exodeoxyribonuclease activity on mismatched deoxyribonucleotides at the 3' termini of nicked or gapped DNA molecules during short-patch BER. Possesses DNA 3' phosphodiesterase activity capable of removing lesions (such as phosphoglycolate and 8-oxoguanine) blocking the 3' side of DNA strand breaks. Also acts as an endoribonuclease involved in the control of single-stranded RNA metabolism. Plays a role in regulating MYC mRNA turnover by preferentially cleaving in between UA and CA dinucleotides of the MYC coding region determinant (CRD). In association with NMD1, plays a role in the rRNA quality control process during cell cycle progression. Acts as a loading factor for POLB onto non-incised AP sites in DNA and stimulates the 5'-terminal deoxyribose 5'-phosphate (dRp) excision activity of POLB. Exerts reversible nuclear redox activity to regulate DNA binding affinity and transcriptional activity of transcriptional factors by controlling the redox status of their DNA-binding domain, such as the FOS/JUN AP-1 complex after exposure to IR. Involved in calcium-dependent down-regulation of parathyroid hormone (PTH) expression by binding to negative calcium response elements (nCaREs). Together with HNRNPL or the dimer XRCC5/XRCC6, associates with nCaRE, acting as an activator of transcriptional repression. May also play a role in the epigenetic regulation of gene expression by participating in DNA demethylation. Stimulates the YBX1-mediated MDR1 promoter activity, when acetylated at Lys-6 and Lys-7, leading to drug resistance. Plays a role in protection from granzyme-mediated cellular repair leading to cell death. Binds DNA and RNA. Associates, together with YBX1, on the MDR1 promoter. Together with NPM1, associates with rRNA. The chain is DNA repair nuclease/redox regulator APEX1 (Apex1) from Rattus norvegicus (Rat).